Reading from the N-terminus, the 216-residue chain is Redox-sensing transcriptional repressor Rex (216 aa).

Residues 20-59 constitute a DNA-binding region (H-T-H motif); that stretch reads QYYRLFKSLVEENVTRTNSQLISEKIGVDAATIRRDFSLF. NAD(+) is bound at residue 94 to 99; that stretch reads GVGNLG.

It belongs to the transcriptional regulatory Rex family. As to quaternary structure, homodimer.

It is found in the cytoplasm. In terms of biological role, modulates transcription in response to changes in cellular NADH/NAD(+) redox state. In Lactococcus lactis subsp. lactis (strain IL1403) (Streptococcus lactis), this protein is Redox-sensing transcriptional repressor Rex.